Reading from the N-terminus, the 122-residue chain is Large ribosomal subunit protein uL14 (122 aa).

This sequence belongs to the universal ribosomal protein uL14 family. Part of the 50S ribosomal subunit. Forms a cluster with proteins L3 and L19. In the 70S ribosome, L14 and L19 interact and together make contacts with the 16S rRNA in bridges B5 and B8.

Functionally, binds to 23S rRNA. Forms part of two intersubunit bridges in the 70S ribosome. The chain is Large ribosomal subunit protein uL14 from Chlorobium chlorochromatii (strain CaD3).